A 192-amino-acid chain; its full sequence is Small ribosomal subunit protein uS5 (192 aa).

An S5 DRBM domain is found at 20 to 83 (FVDRLVHINR…EAAKRGLIRV (64 aa)). The segment at 165–192 (ARRGLKVSALQARRRDAEPGSADSADAA) is disordered.

The protein belongs to the universal ribosomal protein uS5 family. Part of the 30S ribosomal subunit. Contacts proteins S4 and S8.

With S4 and S12 plays an important role in translational accuracy. Functionally, located at the back of the 30S subunit body where it stabilizes the conformation of the head with respect to the body. The sequence is that of Small ribosomal subunit protein uS5 from Methylobacterium sp. (strain 4-46).